The following is a 96-amino-acid chain: NADH-quinone oxidoreductase subunit K (96 aa).

A run of 3 helical transmembrane segments spans residues 1–21 (MNYI…VLVR), 25–45 (IIVF…FVAF), and 56–76 (VIAF…LAII).

This sequence belongs to the complex I subunit 4L family. In terms of assembly, NDH-1 is composed of 14 different subunits. Subunits NuoA, H, J, K, L, M, N constitute the membrane sector of the complex.

Its subcellular location is the cell membrane. The enzyme catalyses a quinone + NADH + 5 H(+)(in) = a quinol + NAD(+) + 4 H(+)(out). NDH-1 shuttles electrons from NADH, via FMN and iron-sulfur (Fe-S) centers, to quinones in the respiratory chain. The immediate electron acceptor for the enzyme in this species is believed to be a menaquinone. Couples the redox reaction to proton translocation (for every two electrons transferred, four hydrogen ions are translocated across the cytoplasmic membrane), and thus conserves the redox energy in a proton gradient. The polypeptide is NADH-quinone oxidoreductase subunit K (Thermobifida fusca (strain YX)).